Here is a 316-residue protein sequence, read N- to C-terminus: L-lactate dehydrogenase 3 (316 aa).

Residues V16, D37, R42, and Y68 each contribute to the NAD(+) site. R91 serves as a coordination point for substrate. NAD(+) is bound by residues S104, 121–123, and T146; that span reads ASN. 123-126 lines the substrate pocket; it reads NPVD. Residue 151–154 coordinates substrate; that stretch reads DSSR. 2 residues coordinate beta-D-fructose 1,6-bisphosphate: R156 and H171. Residue H178 is the Proton acceptor of the active site. Substrate is bound at residue T233.

The protein belongs to the LDH/MDH superfamily. LDH family. In terms of assembly, homotetramer.

The protein localises to the cytoplasm. The catalysed reaction is (S)-lactate + NAD(+) = pyruvate + NADH + H(+). The protein operates within fermentation; pyruvate fermentation to lactate; (S)-lactate from pyruvate: step 1/1. Allosterically activated by fructose 1,6-bisphosphate (FBP). Catalyzes the conversion of lactate to pyruvate. The polypeptide is L-lactate dehydrogenase 3 (Bacillus thuringiensis subsp. konkukian (strain 97-27)).